A 1263-amino-acid polypeptide reads, in one-letter code: Kinesin-like protein KIN-12E (1263 aa).

The segment at 21–44 (PAPSESLRSVPCTPEANTVSRDNH) is disordered. A compositionally biased stretch (polar residues) spans 35–44 (EANTVSRDNH). Residues 93 to 430 (NVQVIIRTRP…LKFAQRAKLI (338 aa)) form the Kinesin motor domain. Position 174 to 181 (174 to 181 (GQTGSGKT)) interacts with ATP. 6 coiled-coil regions span residues 679–737 (SKKL…KIRS), 764–805 (AEAH…AEEN), 831–881 (ALEV…KRLL), 905–966 (SEKS…HQSE), 1091–1168 (TDLL…TIQE), and 1193–1251 (LRKE…VLSL).

It belongs to the TRAFAC class myosin-kinesin ATPase superfamily. Kinesin family. KIN-12 subfamily.

This Arabidopsis thaliana (Mouse-ear cress) protein is Kinesin-like protein KIN-12E.